A 186-amino-acid chain; its full sequence is MKIAQELRVGNVFMMNGAPMVVQKAEYNKSGRNAAVVKMKYKNLLTEAPGESVFKADDKFEVVVLERRECTYSYFADPMYVFMDADYNQFEVEQDSMGDALNYLEDGMAVEVVFYNEKAISVEMPTTLVREIVYTEPAVKGDTSSGKVLKGAKINTGFELQVPLFCNIGDKIEIDTRTGEYRSRAN.

This sequence belongs to the elongation factor P family.

The protein localises to the cytoplasm. Its pathway is protein biosynthesis; polypeptide chain elongation. Its function is as follows. Involved in peptide bond synthesis. Stimulates efficient translation and peptide-bond synthesis on native or reconstituted 70S ribosomes in vitro. Probably functions indirectly by altering the affinity of the ribosome for aminoacyl-tRNA, thus increasing their reactivity as acceptors for peptidyl transferase. In Cupriavidus pinatubonensis (strain JMP 134 / LMG 1197) (Cupriavidus necator (strain JMP 134)), this protein is Elongation factor P.